The sequence spans 473 residues: MGRITEDLIRRNAEHNDCVIFSLEELSLHQQEIERLEHIDKWCRDLKILYLQNNLIGKIENVSKLKKLEYLNLALNNIERIENLEGCEWLTKLDLTVNFIGELSSVKTLTHNIHLKELFLMGNPCADFDGYRQFVVVTLQQLKWLDGKEIERSERIQALQNYTSVEQQIREQEKAYCLRRAKEKEEAQRKLEEENESEDKKKSSTGFDGHWYTDIHTACPSATENQDYPQVPETQEEQHNTKESDDIEDDLAFWNKPSLFTPESRLETLRHMEKQRKAQDKLSEKKKKAKPPRTLITEDGKVLNVNEAKLDFSLKDDEKHNQIILDLAVYRYMDTSLIEVDVQPTYVRVMVKGKPFQLALSTEVQPDRSSAKRSQTTGHLLICMPKVGEMITGGQRTPTSVKTTSTSSREQTNPRKKQIERLEVDPSKHSCPDVSTIVQEKRHRPKRMESQPRDEPSEEDPDFEDNPEVPPLI.

LRR repeat units lie at residues 22-43, 45-66, 67-88, and 89-110; these read SLEE…DKWC, DLKI…SKLK, KLEY…EGCE, and WLTK…KTLT. Residues 123 to 161 enclose the LRRCT domain; that stretch reads NPCADFDGYRQFVVVTLQQLKWLDGKEIERSERIQALQN. The stretch at 153 to 205 forms a coiled coil; sequence SERIQALQNYTSVEQQIREQEKAYCLRRAKEKEEAQRKLEEENESEDKKKSST. Basic and acidic residues-rich tracts occupy residues 188 to 202 and 273 to 283; these read QRKL…DKKK and EKQRKAQDKLS. Disordered stretches follow at residues 188–244, 273–292, and 387–473; these read QRKL…TKES, EKQR…AKPP, and VGEM…PPLI. A CS domain is found at 305-402; that stretch reads VNEAKLDFSL…GGQRTPTSVK (98 aa). Residues 397–408 show a composition bias toward low complexity; it reads TPTSVKTTSTSS. The segment covering 417-431 has biased composition (basic and acidic residues); it reads KQIERLEVDPSKHSC. Over residues 456–467 the composition is skewed to acidic residues; sequence PSEEDPDFEDNP.

It belongs to the tilB family. Interacts (via CS domain) with ZMYND10 (via C-terminus). In terms of tissue distribution, mainly expressed in cells with motile cilia. Expressed in epithelial cells of the trachea, testis and ependymal cells of the cerebral ventricles. In testis, abundant expression in late prophase of meiosis I with a dramatic decrease after the first meiotic division (at protein level).

The protein resides in the cytoplasm. Its subcellular location is the cell projection. It localises to the cilium. It is found in the dynein axonemal particle. The protein localises to the flagellum. Involved in dynein arm assembly, is important for expression and transporting outer dynein arm (ODA) proteins from the cytoplasm to the cilia. Acts as a crucial component in the formation and motility of spermatozoal flagella. In Mus musculus (Mouse), this protein is Dynein axonemal assembly factor 11 (Dnaaf11).